The sequence spans 171 residues: MLP-like protein 31 (171 aa).

Belongs to the MLP family.

The chain is MLP-like protein 31 (MLP31) from Arabidopsis thaliana (Mouse-ear cress).